We begin with the raw amino-acid sequence, 144 residues long: Noggin (144 aa).

An N-terminal signal peptide occupies residues 1–4; that stretch reads GGGG. Intrachain disulfides connect Cys-67–Cys-104, Cys-90–Cys-140, Cys-96–Cys-142, and Cys-119–Cys-127.

This sequence belongs to the noggin family. Homodimer. Interacts with GDF5; inhibits chondrocyte differentiation. As to expression, prominently expressed in the CNS. High levels found in mitral and tufted cells in the olfactory bulb, piriform cortex of the brain and Purkinje cells in the cerebellum. Low level expression seen in the lung, skeletal muscle and skin.

Its subcellular location is the secreted. Functionally, essential for cartilage morphogenesis and joint formation. Inhibitor of bone morphogenetic proteins (BMP) signaling which is required for growth and patterning of the neural tube and somite. Inhibits chondrocyte differentiation through its interaction with GDF5 and, probably, GDF6. The chain is Noggin (Nog) from Rattus norvegicus (Rat).